The following is an 852-amino-acid chain: Cell surface glycoprotein (852 aa).

The N-terminal stretch at 1–34 is a signal peptide; it reads MTDTTGKLRAVLLTALMVGSVIGAGVAFTGGAAA. N36 carries an N-linked (GalNAc...) (glycosaminoglycan) asparagine glycan. The tract at residues 84–131 is disordered; sequence KLDNEKEVSPATLSRTGGSDEGVPLQMPIPEDQSTGSYDSNGPDNDEA. Residues 115–126 show a composition bias toward polar residues; that stretch reads DQSTGSYDSNGP. 8 N-linked (Glc...) asparagine glycosylation sites follow: N339, N398, N438, N513, N643, N727, N751, and N787. A disordered region spans residues 772 to 828; that stretch reads ELEEPDQTTVDQPENNQTMTTTMTETTTETTTEMTTTQENTTENGSEGTSDGESGGS. Low complexity predominate over residues 785–823; that stretch reads ENNQTMTTTMTETTTETTTEMTTTQENTTENGSEGTSDG. O-linked (Gal...) threonine glycans are attached at residues T789, T791, T792, T793, T795, T797, T798, T799, T801, T802, T803, T806, T807, and T808. N811 carries N-linked (Glc...) asparagine glycosylation. Residues T812 and T813 are each glycosylated (O-linked (Gal...) threonine). An N-linked (Glc...) asparagine glycan is attached at N815. A helical membrane pass occupies residues 829–849; it reads IPGFGVGVALVAVLGAALLAL. Positions 830–832 match the PGF sorting signal motif; sequence PGF.

It belongs to the halobacterial S-layer protein family. In terms of processing, N-linked glycan at Asn-36 consists of a glycosaminoglycan chain, constructed by a repeating sulfated pentasaccharide block composed of GlcNAc, GalNAc, Gal, GalA, 3-O-methyl-GalA, and sulfate in the molar ratio of 1:1:1:1:1:2; the other N-linked glycans contain Glc, GlcA and IdoA. Post-translationally, O-linked glycans consist of Glc-Gal disaccharides. The C-terminus (residues 770-778) is lipidated with diphytanylglyceryl phosphate. In terms of processing, cleaved by the archaeosortase ArtA at the C-terminus, with removal of a short hydrophobic segment.

It localises to the secreted. It is found in the cell wall. The protein localises to the S-layer. Its subcellular location is the cell membrane. Its function is as follows. S-layer protein. The S-layer is a paracrystalline mono-layered assembly of proteins which coat the surface of the cell. The polypeptide is Cell surface glycoprotein (csg) (Halobacterium salinarum (strain ATCC 29341 / DSM 671 / R1)).